The chain runs to 189 residues: GMP synthase [glutamine-hydrolyzing] subunit A (189 aa).

A Glutamine amidotransferase type-1 domain is found at 5 to 189; it reads KILVVNNYGQ…TNFLEICEKY (185 aa). Catalysis depends on C79, which acts as the Nucleophile. Active-site residues include H166 and E168.

Heterodimer composed of a glutamine amidotransferase subunit (A) and a GMP-binding subunit (B).

The enzyme catalyses XMP + L-glutamine + ATP + H2O = GMP + L-glutamate + AMP + diphosphate + 2 H(+). The protein operates within purine metabolism; GMP biosynthesis; GMP from XMP (L-Gln route): step 1/1. Its function is as follows. Catalyzes the synthesis of GMP from XMP. This chain is GMP synthase [glutamine-hydrolyzing] subunit A, found in Methanosarcina barkeri (strain Fusaro / DSM 804).